Consider the following 247-residue polypeptide: tRNA pseudouridine synthase A 1 (247 aa).

Aspartate 53 functions as the Nucleophile in the catalytic mechanism. Tyrosine 111 contacts substrate.

It belongs to the tRNA pseudouridine synthase TruA family. Homodimer.

The enzyme catalyses uridine(38/39/40) in tRNA = pseudouridine(38/39/40) in tRNA. Functionally, formation of pseudouridine at positions 38, 39 and 40 in the anticodon stem and loop of transfer RNAs. This chain is tRNA pseudouridine synthase A 1, found in Bacillus cereus (strain ATCC 10987 / NRS 248).